The chain runs to 242 residues: Putative S-adenosyl-L-methionine-dependent methyltransferase Mmcs_0580 (242 aa).

Residues aspartate 104 and 134–135 (DL) each bind S-adenosyl-L-methionine.

The protein belongs to the UPF0677 family.

In terms of biological role, exhibits S-adenosyl-L-methionine-dependent methyltransferase activity. The chain is Putative S-adenosyl-L-methionine-dependent methyltransferase Mmcs_0580 from Mycobacterium sp. (strain MCS).